The chain runs to 1551 residues: Pentafunctional AROM polypeptide (1551 aa).

A 3-dehydroquinate synthase region spans residues 1-379 (MSIEKVPILG…YQLKAHEVSK (379 aa)). NAD(+)-binding positions include 42 to 44 (DTN), 80 to 83 (ENNK), 111 to 113 (GGV), and D116. R127 is a 7-phospho-2-dehydro-3-deoxy-D-arabino-heptonate binding site. 136 to 137 (TT) is an NAD(+) binding site. Residues D143 and K149 each coordinate 7-phospho-2-dehydro-3-deoxy-D-arabino-heptonate. K158 is an NAD(+) binding site. Residue N159 participates in 7-phospho-2-dehydro-3-deoxy-D-arabino-heptonate binding. Residues 176-179 (YLES) and N187 contribute to the NAD(+) site. E191 serves as a coordination point for Zn(2+). 7-phospho-2-dehydro-3-deoxy-D-arabino-heptonate contacts are provided by residues 191-194 (EVVK) and K243. The Proton acceptor; for 3-dehydroquinate synthase activity role is filled by E253. Residues 257-261 (RNLLN) and H264 each bind 7-phospho-2-dehydro-3-deoxy-D-arabino-heptonate. Position 264 (H264) interacts with Zn(2+). Catalysis depends on H268, which acts as the Proton acceptor; for 3-dehydroquinate synthase activity. H280 and K351 together coordinate 7-phospho-2-dehydro-3-deoxy-D-arabino-heptonate. H280 serves as a coordination point for Zn(2+). The tract at residues 392-838 (VHPFKQPPQE…WDILHSKFNI (447 aa)) is EPSP synthase. The shikimate kinase stretch occupies residues 858–1048 (DKSIIIIGMR…IPSGRSAALS (191 aa)). 865-872 (GMRGTGKS) provides a ligand contact to ATP. The 3-dehydroquinase stretch occupies residues 1049 to 1258 (LTVPDLNAIS…NEDGLLTIKE (210 aa)). K1194 acts as the Schiff-base intermediate with substrate; for 3-dehydroquinate dehydratase activity in catalysis. The interval 1271-1551 (AKKFWVIGSP…DVIHRAVVEE (281 aa)) is shikimate dehydrogenase.

The protein in the N-terminal section; belongs to the sugar phosphate cyclases superfamily. Dehydroquinate synthase family. In the 2nd section; belongs to the EPSP synthase family. This sequence in the 3rd section; belongs to the shikimate kinase family. It in the 4th section; belongs to the type-I 3-dehydroquinase family. The protein in the C-terminal section; belongs to the shikimate dehydrogenase family. In terms of assembly, homodimer. Requires Zn(2+) as cofactor.

The protein localises to the cytoplasm. The catalysed reaction is 7-phospho-2-dehydro-3-deoxy-D-arabino-heptonate = 3-dehydroquinate + phosphate. It catalyses the reaction 3-dehydroquinate = 3-dehydroshikimate + H2O. The enzyme catalyses shikimate + NADP(+) = 3-dehydroshikimate + NADPH + H(+). It carries out the reaction shikimate + ATP = 3-phosphoshikimate + ADP + H(+). The catalysed reaction is 3-phosphoshikimate + phosphoenolpyruvate = 5-O-(1-carboxyvinyl)-3-phosphoshikimate + phosphate. The protein operates within metabolic intermediate biosynthesis; chorismate biosynthesis; chorismate from D-erythrose 4-phosphate and phosphoenolpyruvate: step 2/7. It participates in metabolic intermediate biosynthesis; chorismate biosynthesis; chorismate from D-erythrose 4-phosphate and phosphoenolpyruvate: step 3/7. It functions in the pathway metabolic intermediate biosynthesis; chorismate biosynthesis; chorismate from D-erythrose 4-phosphate and phosphoenolpyruvate: step 4/7. Its pathway is metabolic intermediate biosynthesis; chorismate biosynthesis; chorismate from D-erythrose 4-phosphate and phosphoenolpyruvate: step 5/7. The protein operates within metabolic intermediate biosynthesis; chorismate biosynthesis; chorismate from D-erythrose 4-phosphate and phosphoenolpyruvate: step 6/7. The AROM polypeptide catalyzes 5 consecutive enzymatic reactions in prechorismate polyaromatic amino acid biosynthesis. The sequence is that of Pentafunctional AROM polypeptide from Candida tropicalis (strain ATCC MYA-3404 / T1) (Yeast).